The sequence spans 514 residues: 5'-AMP-activated protein kinase subunit gamma-3 (514 aa).

2 disordered regions span residues 1-121 (MELA…FPKA) and 134-155 (DNPP…SDSN). Over residues 59-71 (SRSWPSRAVTTSS) the composition is skewed to polar residues. CBS domains lie at 222-283 (MATS…RSPL), 305-363 (CFKP…GTLL), and 380-440 (TFRD…HLDM). ADP contacts are provided by residues R250, 265 to 270 (MLTITD), V310, 331 to 332 (HR), and K350. Residues R250, 265-270 (MLTITD), V310, H331, 331-332 (HR), K350, T380, A385, 406-407 (SA), 422-425 (SRFD), R449, L457, H478, 478-479 (HR), and 494-497 (SLSD) contribute to the AMP site. ATP contacts are provided by residues R250, 265 to 270 (MLTITD), V310, 331 to 332 (HR), R332, and K350. Positions 318–339 (LFEAVYALIKNRIHRLPVLDPV) match the AMPK pseudosubstrate motif. ADP is bound by residues 422-425 (SRFD), R449, L457, and 478-479 (HR). ATP contacts are provided by residues 422–425 (SRFD), R449, L457, and 478–479 (HR). Residues 452-511 (CLEGVLSCQPHETLGEVIDRIVREQVHRLVLVDETQHLLGVVSLSDILQALVLSPAGIDA) enclose the CBS 4 domain.

The protein belongs to the 5'-AMP-activated protein kinase gamma subunit family. AMPK is a heterotrimer of an alpha catalytic subunit (PRKAA1 or PRKAA2), a beta (PRKAB1 or PRKAB2) and a gamma non-catalytic subunits (PRKAG1, PRKAG2 or PRKAG3). Interacts with FNIP1 and FNIP2. Phosphorylated by ULK1; leading to negatively regulate AMPK activity and suggesting the existence of a regulatory feedback loop between ULK1 and AMPK. In terms of processing, glycosylated; O-GlcNAcylated by OGT, promoting the AMP-activated protein kinase (AMPK) activity. Muscle.

Functionally, AMP/ATP-binding subunit of AMP-activated protein kinase (AMPK), an energy sensor protein kinase that plays a key role in regulating cellular energy metabolism. In response to reduction of intracellular ATP levels, AMPK activates energy-producing pathways and inhibits energy-consuming processes: inhibits protein, carbohydrate and lipid biosynthesis, as well as cell growth and proliferation. AMPK acts via direct phosphorylation of metabolic enzymes, and by longer-term effects via phosphorylation of transcription regulators. AMPK also acts as a regulator of cellular polarity by remodeling the actin cytoskeleton; probably by indirectly activating myosin. The AMPK gamma3 subunit is a non-catalytic subunit with a regulatory role in muscle energy metabolism. It mediates binding to AMP, ADP and ATP, leading to AMPK activation or inhibition: AMP-binding results in allosteric activation of alpha catalytic subunit (PRKAA1 or PRKAA2) both by inducing phosphorylation and preventing dephosphorylation of catalytic subunits. ADP also stimulates phosphorylation, without stimulating already phosphorylated catalytic subunit. ATP promotes dephosphorylation of catalytic subunit, rendering the AMPK enzyme inactive. The sequence is that of 5'-AMP-activated protein kinase subunit gamma-3 (PRKAG3) from Sus scrofa (Pig).